We begin with the raw amino-acid sequence, 255 residues long: MSRLSLTRSPVSPLAAQGIPLPAQLTKSNAPVHIDVGGHMYTSSLATLTKYPDSRISRLFNGTEPIVLDSLKQHYFIDRDGEIFRYILSFLRTSKLLLPEDFKEFNLLYEEAKYYQLHPMVKELERWKQDKEHRKHFQPCDCLVVRVTPDLGERIALSGEKALIEEIFPETGDVMCNSVNAGWNQDPTHVIRFPLNGYCRLNSVQVLERMFQKGFHVAASCGGGVDSSQFSEYVLCREDRRMQPNTMRIKQEPLD.

Positions 30-100 (APVHIDVGGH…LRTSKLLLPE (71 aa)) constitute a BTB domain.

In terms of assembly, forms oligomers, predominantly homopentamers. Interacts with TFAP2A; this interaction inhibits TFAP2A transcriptional activation.

It localises to the nucleus. During embryonic development, interferes with neural crest formation. Inhibits AP2 transcriptional activity by interaction with its activation domain. This Xenopus tropicalis (Western clawed frog) protein is BTB/POZ domain-containing protein kctd15 (kctd15).